Here is a 247-residue protein sequence, read N- to C-terminus: Carboxy-S-adenosyl-L-methionine synthase (247 aa).

Residues Tyr-40, 65–67 (GAS), 90–91 (DN), 122–123 (DI), Asn-137, and Arg-204 contribute to the S-adenosyl-L-methionine site.

It belongs to the class I-like SAM-binding methyltransferase superfamily. Cx-SAM synthase family. As to quaternary structure, homodimer.

The enzyme catalyses prephenate + S-adenosyl-L-methionine = carboxy-S-adenosyl-L-methionine + 3-phenylpyruvate + H2O. Functionally, catalyzes the conversion of S-adenosyl-L-methionine (SAM) to carboxy-S-adenosyl-L-methionine (Cx-SAM). This Pseudomonas putida (strain W619) protein is Carboxy-S-adenosyl-L-methionine synthase.